The chain runs to 327 residues: 2-keto-3-deoxygluconate permease (327 aa).

Transmembrane regions (helical) follow at residues 10–30 (IPGG…TFSP), 42–62 (GMIT…GASI), 73–93 (KSGT…AIAS), 95–115 (IIPE…LALV), 139–159 (AGAF…IILG), 163–183 (IASF…VGFA), 199–219 (VQTL…LTVI), 224–244 (LLGI…LIIA), 254–274 (TAGI…VLIA), and 289–309 (SLVA…TSIW).

It belongs to the KdgT transporter family.

The protein resides in the cell inner membrane. It catalyses the reaction 2-dehydro-3-deoxy-D-gluconate(in) + H(+)(in) = 2-dehydro-3-deoxy-D-gluconate(out) + H(+)(out). Its function is as follows. Catalyzes the proton-dependent uptake of 2-keto-3-deoxygluconate (KDG) into the cell. The chain is 2-keto-3-deoxygluconate permease from Escherichia coli O127:H6 (strain E2348/69 / EPEC).